The chain runs to 207 residues: Guanylate kinase (207 aa).

The Guanylate kinase-like domain maps to 4-184 (GTLYIVSAPS…ALSDLKTIIR (181 aa)). 11-18 (APSGAGKS) lines the ATP pocket.

Belongs to the guanylate kinase family.

The protein resides in the cytoplasm. It carries out the reaction GMP + ATP = GDP + ADP. In terms of biological role, essential for recycling GMP and indirectly, cGMP. This Salmonella paratyphi A (strain ATCC 9150 / SARB42) protein is Guanylate kinase.